A 579-amino-acid polypeptide reads, in one-letter code: Transcription factor MTB2 (579 aa).

The tract at residues 373-439 (GGMQIDFTNS…PLNHVEAERQ (67 aa)) is disordered. Over residues 382–392 (SRPVVSPVPTV) the composition is skewed to low complexity. Basic and acidic residues-rich tracts occupy residues 393 to 415 (ESEHSDVEVSCKEKHAGPADERR) and 425 to 439 (NGREEPLNHVEAERQ). A basic motif; degenerate region spans residues 428 to 441 (EEPLNHVEAERQRR). The 50-residue stretch at 428–477 (EEPLNHVEAERQRREKLNQRFYALRAVVPNISKMDKASLLGDAIAHITDM) folds into the bHLH domain. The segment at 442–477 (EKLNQRFYALRAVVPNISKMDKASLLGDAIAHITDM) is helix-loop-helix motif.

It is found in the nucleus. In terms of biological role, transcription factor that negatively regulates jasmonate (JA) signaling. Negatively regulates JA-dependent response to wounding, JA-induced expression of defense genes, JA-dependent responses against herbivorous insects, and JA-dependent resistance against Botrytis cinerea infection. Plays a positive role in resistance against the bacterial pathogen Pseudomonas syringae pv tomato DC3000. This Solanum lycopersicum (Tomato) protein is Transcription factor MTB2.